The chain runs to 195 residues: dCTP deaminase (195 aa).

Residues 110–115 (RSSLAR), aspartate 128, 136–138 (VLE), tyrosine 171, lysine 178, and glutamine 182 contribute to the dCTP site. Residue glutamate 138 is the Proton donor/acceptor of the active site. Positions 171-195 (YSSRKDAKYKNQQSAVASRIDEDKE) are disordered.

The protein belongs to the dCTP deaminase family. In terms of assembly, homotrimer.

It carries out the reaction dCTP + H2O + H(+) = dUTP + NH4(+). It participates in pyrimidine metabolism; dUMP biosynthesis; dUMP from dCTP (dUTP route): step 1/2. Functionally, catalyzes the deamination of dCTP to dUTP. This is dCTP deaminase from Haemophilus influenzae (strain ATCC 51907 / DSM 11121 / KW20 / Rd).